The primary structure comprises 470 residues: Dihydrolipoyl dehydrogenase (470 aa).

Residues 39 to 47, Lys56, and Ala119 contribute to the FAD site; that span reads EKGNLGGVC. Cysteines 47 and 52 form a disulfide. NAD(+) contacts are provided by residues 183 to 187, Glu206, and 271 to 274; these read GGGYI and TVGR. Positions 314 and 322 each coordinate FAD. His446 serves as the catalytic Proton acceptor.

It belongs to the class-I pyridine nucleotide-disulfide oxidoreductase family. As to quaternary structure, homodimer. Identified in a complex with PdhC. Requires FAD as cofactor.

It localises to the cytoplasm. The enzyme catalyses N(6)-[(R)-dihydrolipoyl]-L-lysyl-[protein] + NAD(+) = N(6)-[(R)-lipoyl]-L-lysyl-[protein] + NADH + H(+). Its function is as follows. Lipoamide dehydrogenase is a component of the alpha-ketoacid dehydrogenase complexes. This chain is Dihydrolipoyl dehydrogenase (pdhD), found in Geobacillus stearothermophilus (Bacillus stearothermophilus).